Consider the following 277-residue polypeptide: Mitochondrial outer membrane protein porin 5 (277 aa).

The protein belongs to the eukaryotic mitochondrial porin (TC 1.B.8.1) family.

Its subcellular location is the mitochondrion outer membrane. Its function is as follows. Forms a channel through the mitochondrial outer membrane that allows diffusion of small hydrophilic molecules. The channel adopts an open conformation at low or zero membrane potential and a closed conformation at potentials above 30-40 mV. The open state has a weak anion selectivity whereas the closed state is cation-selective. This Oryza sativa subsp. japonica (Rice) protein is Mitochondrial outer membrane protein porin 5 (VDAC5).